The following is a 235-amino-acid chain: MIYAGILAGGTGTRMGISNLPKQFLELGDRPILIHTIEKFVLEPSIEKIVVGVHGDWVSHAEDLVDKYLPLYKERIIITKGGADRNTSIKKIIEAIDAYRPLTPEDIVVTHDSVRPFITLRMIQDNIQLAQNHDAVDTVVEAVDTIVESTNGQFITDIPNRAHLYQGQTPQTFRCKDFVDLYGSLSDEEKEILTDACKIFVIKGKDVALAKGEYSNLKITTVTDLKIAKSMIEKD.

CTP is bound by residues Leu-7 to Gly-10, Gly-82 to Ser-88, and Ser-113.

This sequence belongs to the IspD/TarI cytidylyltransferase family. TarI subfamily.

It catalyses the reaction D-ribitol 5-phosphate + CTP + H(+) = CDP-L-ribitol + diphosphate. It functions in the pathway cell wall biogenesis; poly(ribitol phosphate) teichoic acid biosynthesis. Its function is as follows. Catalyzes the transfer of the cytidylyl group of CTP to D-ribitol 5-phosphate. In Streptococcus pneumoniae (strain Hungary19A-6), this protein is Ribitol-5-phosphate cytidylyltransferase.